The chain runs to 205 residues: Troponin I, cardiac muscle (205 aa).

The interval 1–38 is disordered; that stretch reads MADQSGNAAPPPVRRRSSANYRAYATEPHAKKKSKISA. An N-acetylalanine modification is found at alanine 2. A Phosphoserine modification is found at serine 5. Phosphoserine; by PKA and PKD/PRKD1 occurs at positions 17 and 18. Tyrosine 21 bears the Phosphotyrosine mark. Phosphothreonine; by STK4/MST1 is present on threonine 26. The interval 27–74 is involved in binding TNC; the sequence is EPHAKKKSKISASRKLQLKTLMLQIAKQELEREAVERRGEKGRALSTR. A phosphoserine; by PKC/PRKCE mark is found at serine 37 and serine 39. Threonine 46 carries the phosphothreonine; by STK4/MST1 modification. Serine 72 carries the post-translational modification Phosphoserine. Threonine 73 is modified (phosphothreonine). The interval 124–145 is involved in binding TNC and actin; the sequence is NQKIFDLRGKFKRPTLRRVRIS. Phosphothreonine; by STK4/MST1 is present on threonine 138. The residue at position 145 (serine 145) is a Phosphoserine; by PAK3. The residue at position 176 (threonine 176) is a Phosphothreonine. Serine 194 is modified (phosphoserine).

This sequence belongs to the troponin I family. Binds to actin and tropomyosin. Interacts with TRIM63. Interacts with STK4/MST1. In terms of processing, phosphorylated at Ser-17 and Ser-18 by PRKD1; phosphorylation reduces myofilament calcium sensitivity. Phosphorylated preferentially at Thr-26. Phosphorylation by STK4/MST1 alters its binding affinity to TNNC1 (cardiac Tn-C) and TNNT2 (cardiac Tn-T). Phosphorylated at Ser-37 and Ser-39 by PRKCE; phosphorylation increases myocardium contractile dysfunction.

Troponin I is the inhibitory subunit of troponin, the thin filament regulatory complex which confers calcium-sensitivity to striated muscle actomyosin ATPase activity. In Equus caballus (Horse), this protein is Troponin I, cardiac muscle (TNNI3).